The following is a 238-amino-acid chain: Large ribosomal subunit protein bL25 (238 aa).

Basic and acidic residues predominate over residues 1–10 (MATTVKELKA). A disordered region spans residues 1 to 24 (MATTVKELKATARPKSGKGAARAE).

This sequence belongs to the bacterial ribosomal protein bL25 family. CTC subfamily. In terms of assembly, part of the 50S ribosomal subunit; part of the 5S rRNA/L5/L18/L25 subcomplex. Contacts the 5S rRNA. Binds to the 5S rRNA independently of L5 and L18.

Functionally, this is one of the proteins that binds to the 5S RNA in the ribosome where it forms part of the central protuberance. The protein is Large ribosomal subunit protein bL25 of Bradyrhizobium diazoefficiens (strain JCM 10833 / BCRC 13528 / IAM 13628 / NBRC 14792 / USDA 110).